The sequence spans 323 residues: Breast cancer metastasis-suppressor 1-like protein (323 aa).

Over residues 1–17 (MPVHSRGDKKETNHHDE) the composition is skewed to basic and acidic residues. The tract at residues 1 to 56 (MPVHSRGDKKETNHHDEMEVDYAENEGSSSEDEDTESSSVSEDGDSSEMDDEDCER) is disordered. Over residues 18-53 (MEVDYAENEGSSSEDEDTESSSVSEDGDSSEMDDED) the composition is skewed to acidic residues. 2 coiled-coil regions span residues 52-84 (EDCE…KERL) and 149-180 (EKLL…ITSE). At S197 the chain carries Phosphoserine. Glycyl lysine isopeptide (Lys-Gly) (interchain with G-Cter in SUMO2) cross-links involve residues K240 and K246.

This sequence belongs to the BRMS1 family. In terms of assembly, component of the Sin3/HDAC1 corepressor complex at least composed of BRMS1, BRMS1L and ING2/ING1L. Interacts with HDAC and SIN3A.

It is found in the nucleus. Involved in the histone deacetylase (HDAC1)-dependent transcriptional repression activity. When overexpressed in lung cancer cell line that lacks p53/TP53 expression, inhibits cell growth. In Bos taurus (Bovine), this protein is Breast cancer metastasis-suppressor 1-like protein (BRMS1L).